A 139-amino-acid polypeptide reads, in one-letter code: uncharacterized protein (139 aa).

Residues 3-110 form the HIT domain; it reads IFCNIVEGRD…VPTWSQDPDI (108 aa). The Histidine triad motif signature appears at 95 to 99; that stretch reads HSHFH.

This is an uncharacterized protein from Saccharolobus solfataricus (strain ATCC 35092 / DSM 1617 / JCM 11322 / P2) (Sulfolobus solfataricus).